A 196-amino-acid chain; its full sequence is uncharacterized protein (196 aa).

Residues 26–46 (ITFFFILLICFICILLLLAIF) form a helical membrane-spanning segment.

It is found in the membrane. This is an uncharacterized protein from Mus musculus (Mouse).